The following is a 245-amino-acid chain: Cytochrome c oxidase subunit 2 (245 aa).

Over 1 to 36 (MYMLNNMLNDVPTPWGMFFQDSATPNMEGMMELHNN) the chain is Mitochondrial intermembrane. The chain crosses the membrane as a helical span at residues 37 to 56 (VMFYLCMMLGFVSYMLYNML). Residues 57–76 (TTYNHSVLPYKYLYHGQFIE) lie on the Mitochondrial matrix side of the membrane. The chain crosses the membrane as a helical span at residues 77–101 (IVWTTFPAMILLIIAFPSFILLYIC). The Mitochondrial intermembrane segment spans residues 102–245 (DEVIAPAMTI…GEFLAWIDEQ (144 aa)). Cu cation-binding residues include histidine 180, cysteine 215, glutamate 217, cysteine 219, histidine 223, and methionine 226. Glutamate 217 contributes to the Mg(2+) binding site.

The protein belongs to the cytochrome c oxidase subunit 2 family. In terms of assembly, component of the cytochrome c oxidase (complex IV, CIV), a multisubunit enzyme composed of a catalytic core of 3 subunits and several supernumerary subunits. The complex exists as a monomer or a dimer and forms supercomplexes (SCs) in the inner mitochondrial membrane with ubiquinol-cytochrome c oxidoreductase (cytochrome b-c1 complex, complex III, CIII). Cu cation serves as cofactor.

Its subcellular location is the mitochondrion inner membrane. The catalysed reaction is 4 Fe(II)-[cytochrome c] + O2 + 8 H(+)(in) = 4 Fe(III)-[cytochrome c] + 2 H2O + 4 H(+)(out). Component of the cytochrome c oxidase, the last enzyme in the mitochondrial electron transport chain which drives oxidative phosphorylation. The respiratory chain contains 3 multisubunit complexes succinate dehydrogenase (complex II, CII), ubiquinol-cytochrome c oxidoreductase (cytochrome b-c1 complex, complex III, CIII) and cytochrome c oxidase (complex IV, CIV), that cooperate to transfer electrons derived from NADH and succinate to molecular oxygen, creating an electrochemical gradient over the inner membrane that drives transmembrane transport and the ATP synthase. Cytochrome c oxidase is the component of the respiratory chain that catalyzes the reduction of oxygen to water. Electrons originating from reduced cytochrome c in the intermembrane space (IMS) are transferred via the dinuclear copper A center (CU(A)) of subunit 2 and heme A of subunit 1 to the active site in subunit 1, a binuclear center (BNC) formed by heme A3 and copper B (CU(B)). The BNC reduces molecular oxygen to 2 water molecules using 4 electrons from cytochrome c in the IMS and 4 protons from the mitochondrial matrix. The protein is Cytochrome c oxidase subunit 2 (COX2) of Dekkera bruxellensis (Brettanomyces custersii).